We begin with the raw amino-acid sequence, 509 residues long: Photosystem II CP47 reaction center protein (509 aa).

The next 6 membrane-spanning stretches (helical) occupy residues 21–36, 101–115, 140–156, 203–218, 237–252, and 457–472; these read SVHL…WAGS, IVLS…IWHW, GIHL…FGAF, IAAG…FHLN, VLSS…SFVV, and NFAL…HGSR.

This sequence belongs to the PsbB/PsbC family. PsbB subfamily. As to quaternary structure, PSII is composed of 1 copy each of membrane proteins PsbA, PsbB, PsbC, PsbD, PsbE, PsbF, PsbH, PsbI, PsbJ, PsbK, PsbL, PsbM, PsbT, PsbY, PsbZ, Psb30/Ycf12, at least 3 peripheral proteins of the oxygen-evolving complex and a large number of cofactors. It forms dimeric complexes. Binds multiple chlorophylls. PSII binds additional chlorophylls, carotenoids and specific lipids. is required as a cofactor.

Its subcellular location is the plastid. It localises to the chloroplast thylakoid membrane. Functionally, one of the components of the core complex of photosystem II (PSII). It binds chlorophyll and helps catalyze the primary light-induced photochemical processes of PSII. PSII is a light-driven water:plastoquinone oxidoreductase, using light energy to abstract electrons from H(2)O, generating O(2) and a proton gradient subsequently used for ATP formation. The protein is Photosystem II CP47 reaction center protein of Cyanidium caldarium (Red alga).